Consider the following 214-residue polypeptide: uncharacterized protein (214 aa).

Residues 39 to 68 (KLRSKKEVEEKIKEVDRELEEVVNAGVSIN) are a coiled coil. Over residues 99 to 114 (EIKVEAPEPDEEKLPD) the composition is skewed to basic and acidic residues. The interval 99 to 162 (EIKVEAPEPD…EEVEFDEEDD (64 aa)) is disordered. The segment covering 123-162 (SDLDMDFEDLGQEIPLDADEQEEEEEEEEVEEVEFDEEDD) has biased composition (acidic residues). Residues 138–212 (LDADEQEEEE…IQRLKVLSGG (75 aa)) are a coiled coil.

This is an uncharacterized protein from Archaeoglobus fulgidus (strain ATCC 49558 / DSM 4304 / JCM 9628 / NBRC 100126 / VC-16).